A 126-amino-acid polypeptide reads, in one-letter code: Small ribosomal subunit protein uS13 (126 aa).

Positions 99–126 are disordered; the sequence is LRGQSTKNNARTRKGKRKTVANKKRVTK. Residues 108-126 show a composition bias toward basic residues; sequence ARTRKGKRKTVANKKRVTK.

Belongs to the universal ribosomal protein uS13 family. Part of the 30S ribosomal subunit. Forms a loose heterodimer with protein S19. Forms two bridges to the 50S subunit in the 70S ribosome.

Functionally, located at the top of the head of the 30S subunit, it contacts several helices of the 16S rRNA. In the 70S ribosome it contacts the 23S rRNA (bridge B1a) and protein L5 of the 50S subunit (bridge B1b), connecting the 2 subunits; these bridges are implicated in subunit movement. Contacts the tRNAs in the A and P-sites. The polypeptide is Small ribosomal subunit protein uS13 (Azobacteroides pseudotrichonymphae genomovar. CFP2).